Consider the following 180-residue polypeptide: Vacuolar ATPase assembly protein VMA22 (180 aa).

A coiled-coil region spans residues 16 to 37; sequence QLLGDLEELEGKRTVLNARVEE. The span at 92 to 101 shows a compositional bias: basic and acidic residues; sequence EEVGPREAGL. Residues 92–122 are disordered; that stretch reads EEVGPREAGLRRRKGPTKTPEPESSEAPQDP. The stretch at 153–176 forms a coiled coil; that stretch reads SLQNRIDWGRSQLRGLQEKLKQLE.

As to quaternary structure, accessory component of the multisubunit proton-transporting vacuolar (V)-ATPase protein pump. Expressed throughout the brain.

It localises to the endosome. The protein localises to the lysosome. Its subcellular location is the endoplasmic reticulum-Golgi intermediate compartment. The protein resides in the cytoplasmic vesicle. It is found in the COPI-coated vesicle. It localises to the endoplasmic reticulum. Its function is as follows. Accessory component of the proton-transporting vacuolar (V)-ATPase protein pump involved in intracellular iron homeostasis. In aerobic conditions, required for intracellular iron homeostasis, thus triggering the activity of Fe(2+) prolyl hydroxylase (PHD) enzymes, and leading to HIF1A hydroxylation and subsequent proteasomal degradation. Necessary for endolysosomal acidification and lysosomal degradation. May be involved in Golgi homeostasis. This chain is Vacuolar ATPase assembly protein VMA22, found in Homo sapiens (Human).